A 173-amino-acid chain; its full sequence is Protein tyrosine phosphatase type IVA 1 (173 aa).

Residues 8-161 form the Tyrosine-protein phosphatase domain; that stretch reads APVEVTYKNM…YRPKMRLRFK (154 aa). Cysteines 49 and 104 form a disulfide. The Proton donor role is filled by Asp-72. Positions 97 to 132 are interaction with ATF5; the sequence is GCCIAVHCVAGLGRAPVLVALALIEGGMKYEDAVQF. Cys-104 (phosphocysteine intermediate) is an active-site residue. 105-110 is a binding site for phosphate; that stretch reads VAGLGR. Position 110 (Arg-110) interacts with substrate. The residue at position 170 (Cys-170) is a Cysteine methyl ester. Cys-170 carries S-farnesyl cysteine lipidation. Positions 171–173 are cleaved as a propeptide — removed in mature form; it reads CIQ.

This sequence belongs to the protein-tyrosine phosphatase family. In terms of assembly, homotrimer. Interacts with ATF5. Interacts with tubulin. Farnesylated. Farnesylation is required for membrane targeting. Unfarnesylated forms are shifted into the nucleus. In terms of tissue distribution, expressed in bone marrow, lymph nodes, T lymphocytes, spleen, thymus and tonsil. Overexpressed in tumor cell lines.

It is found in the cell membrane. It localises to the early endosome. Its subcellular location is the endoplasmic reticulum. The protein localises to the cytoplasm. The protein resides in the cytoskeleton. It is found in the spindle. It localises to the nucleus. It catalyses the reaction O-phospho-L-tyrosyl-[protein] + H2O = L-tyrosyl-[protein] + phosphate. Its activity is regulated as follows. Inhibited by sodium orthovanadate and pentamidine. Protein tyrosine phosphatase which stimulates progression from G1 into S phase during mitosis. May play a role in the development and maintenance of differentiating epithelial tissues. Enhances cell proliferation, cell motility and invasive activity, and promotes cancer metastasis. The sequence is that of Protein tyrosine phosphatase type IVA 1 (PTP4A1) from Homo sapiens (Human).